The primary structure comprises 305 residues: 2-oxoacid:ferredoxin oxidoreductase subunit beta (305 aa).

[4Fe-4S] cluster contacts are provided by Cys12, Cys15, and Cys46. Residues 44-47 and His65 contribute to the thiamine diphosphate site; that span reads IGCS. Asp90 is a Mg(2+) binding site. Residue 91-92 coordinates thiamine diphosphate; that stretch reads GD. Residues Asn118 and Val120 each coordinate Mg(2+). Residue 122–123 coordinates thiamine diphosphate; it reads GL. [4Fe-4S] cluster is bound at residue Cys197.

In terms of assembly, heterodimer composed of an alpha and a beta subunit. It depends on [4Fe-4S] cluster as a cofactor. Thiamine diphosphate serves as cofactor. Requires Mg(2+) as cofactor.

The catalysed reaction is a 2-oxocarboxylate + 2 oxidized [2Fe-2S]-[ferredoxin] + CoA = an acyl-CoA + 2 reduced [2Fe-2S]-[ferredoxin] + CO2 + H(+). Catalyzes the coenzyme A-dependent oxidative decarboxylation of different 2-oxoacids such as 2-oxoglutarate, pyruvate and 2-oxobutyrate to form their CoA derivatives. In Saccharolobus solfataricus (Sulfolobus solfataricus), this protein is 2-oxoacid:ferredoxin oxidoreductase subunit beta.